A 263-amino-acid chain; its full sequence is 3-methyl-2-oxobutanoate hydroxymethyltransferase (263 aa).

2 residues coordinate Mg(2+): Asp45 and Asp84. 3-methyl-2-oxobutanoate contacts are provided by residues 45–46 (DS), Asp84, and Lys112. Glu114 contributes to the Mg(2+) binding site. Glu180 serves as the catalytic Proton acceptor.

The protein belongs to the PanB family. In terms of assembly, homodecamer; pentamer of dimers. The cofactor is Mg(2+).

Its subcellular location is the cytoplasm. It carries out the reaction 3-methyl-2-oxobutanoate + (6R)-5,10-methylene-5,6,7,8-tetrahydrofolate + H2O = 2-dehydropantoate + (6S)-5,6,7,8-tetrahydrofolate. It participates in cofactor biosynthesis; (R)-pantothenate biosynthesis; (R)-pantoate from 3-methyl-2-oxobutanoate: step 1/2. Its function is as follows. Catalyzes the reversible reaction in which hydroxymethyl group from 5,10-methylenetetrahydrofolate is transferred onto alpha-ketoisovalerate to form ketopantoate. In Citrobacter koseri (strain ATCC BAA-895 / CDC 4225-83 / SGSC4696), this protein is 3-methyl-2-oxobutanoate hydroxymethyltransferase.